The following is a 322-amino-acid chain: Sideroflexin-2 (322 aa).

Met-1 is subject to N-acetylmethionine. The next 5 helical transmembrane spans lie at 99-119, 147-167, 174-194, 223-243, and 266-286; these read GMLI…VIFW, ALSY…MNMW, LVGR…NIPM, VGIA…MILL, and LQVL…CGLF.

The protein belongs to the sideroflexin family. In terms of tissue distribution, expressed in brain, heart, kidney, spleen, thymus, liver, stomach and skin.

Its subcellular location is the mitochondrion inner membrane. It is found in the mitochondrion outer membrane. It carries out the reaction L-serine(in) = L-serine(out). Functionally, mitochondrial amino-acid transporter that mediates transport of serine into mitochondria. Involved in mitochondrial iron homeostasis by regulating heme biosynthesis. In Mus musculus (Mouse), this protein is Sideroflexin-2.